The sequence spans 212 residues: Thymidylate kinase (212 aa).

7–14 (GIEGSGKS) lines the ATP pocket.

The protein belongs to the thymidylate kinase family.

The catalysed reaction is dTMP + ATP = dTDP + ADP. Functionally, phosphorylation of dTMP to form dTDP in both de novo and salvage pathways of dTTP synthesis. The protein is Thymidylate kinase of Oleidesulfovibrio alaskensis (strain ATCC BAA-1058 / DSM 17464 / G20) (Desulfovibrio alaskensis).